Reading from the N-terminus, the 468-residue chain is Protein CA_C1420 (468 aa).

Positions 1–289 (MSLNGFYLLP…LKELERIRKD (289 aa)) are unknown. Positions 296 to 468 (QEKDPYVKLA…KFMVTRHKES (173 aa)) constitute an AMMECR1 domain.

This chain is Protein CA_C1420, found in Clostridium acetobutylicum (strain ATCC 824 / DSM 792 / JCM 1419 / IAM 19013 / LMG 5710 / NBRC 13948 / NRRL B-527 / VKM B-1787 / 2291 / W).